The primary structure comprises 568 residues: WW domain-containing protein A (568 aa).

Residues 6-129 enclose the C2 domain; it reads PLNNSNGSNS…TGPISHDVVF (124 aa). The WW 1 domain maps to 325–359; that stretch reads VKLPDGWESRIDPVSGKVFYLNHNNKTTSWISPLE. The disordered stretch occupies residues 376-461; it reads TILDNNNNNN…SRPKKTPATP (86 aa). Positions 380 to 418 are enriched in low complexity; the sequence is NNNNNNNNNNNNNNNNNNNNNNINNTNNIQQKQQAQQQP. Residues 435 to 451 are compositionally biased toward basic and acidic residues; sequence QKEKEKEKEINAEDYKI. Positions 519-552 constitute a WW 2 domain; that stretch reads QGLPNGWEVRQDQFGRVFYVDHINRATTWTRPTV.

In terms of assembly, interacts with calmodulin in the absence of Ca(2+).

The protein localises to the nucleus. Its subcellular location is the nucleolus. The protein resides in the cytoplasm. It is found in the cell cortex. It localises to the cytoskeleton. Functionally, involved in regulation of actin cytoskeleton organization and cytokinesis. The sequence is that of WW domain-containing protein A from Dictyostelium discoideum (Social amoeba).